Here is a 512-residue protein sequence, read N- to C-terminus: GMP synthase [glutamine-hydrolyzing] (512 aa).

One can recognise a Glutamine amidotransferase type-1 domain in the interval 7–197; it reads TIIVLDFGSQ…VFGVCGCSEG (191 aa). The Nucleophile role is filled by Cys-84. Catalysis depends on residues His-171 and Glu-173. The GMPS ATP-PPase domain occupies 198-387; it reads WNMENFIEVE…LGIPDEIVWR (190 aa). 225–231 is a binding site for ATP; that stretch reads SGGVDSS.

As to quaternary structure, homodimer.

It catalyses the reaction XMP + L-glutamine + ATP + H2O = GMP + L-glutamate + AMP + diphosphate + 2 H(+). It participates in purine metabolism; GMP biosynthesis; GMP from XMP (L-Gln route): step 1/1. In terms of biological role, catalyzes the synthesis of GMP from XMP. This Bacillus cereus (strain ATCC 10987 / NRS 248) protein is GMP synthase [glutamine-hydrolyzing].